Reading from the N-terminus, the 70-residue chain is Large ribosomal subunit protein eL24 (70 aa).

The Zn(2+) site is built by Cys6, Cys9, Cys32, and Cys36. The C4-type zinc-finger motif lies at Cys6 to Cys36.

Belongs to the eukaryotic ribosomal protein eL24 family. As to quaternary structure, part of the 50S ribosomal subunit. Forms a cluster with proteins L3 and L14. Zn(2+) is required as a cofactor.

Binds to the 23S rRNA. This is Large ribosomal subunit protein eL24 from Caldivirga maquilingensis (strain ATCC 700844 / DSM 13496 / JCM 10307 / IC-167).